The following is a 65-amino-acid chain: Large ribosomal subunit protein bL35 (65 aa).

Belongs to the bacterial ribosomal protein bL35 family.

The protein is Large ribosomal subunit protein bL35 of Erwinia tasmaniensis (strain DSM 17950 / CFBP 7177 / CIP 109463 / NCPPB 4357 / Et1/99).